Reading from the N-terminus, the 372-residue chain is Spermidine/putrescine import ATP-binding protein PotA (372 aa).

In terms of domain architecture, ABC transporter spans 11-241 (IELRSIKKSY…PANLFVARFI (231 aa)). 43-50 (GPSGCGKT) contributes to the ATP binding site.

Belongs to the ABC transporter superfamily. Spermidine/putrescine importer (TC 3.A.1.11.1) family. The complex is composed of two ATP-binding proteins (PotA), two transmembrane proteins (PotB and PotC) and a solute-binding protein (PotD).

It is found in the cell inner membrane. The catalysed reaction is ATP + H2O + polyamine-[polyamine-binding protein]Side 1 = ADP + phosphate + polyamineSide 2 + [polyamine-binding protein]Side 1.. Its function is as follows. Part of the ABC transporter complex PotABCD involved in spermidine/putrescine import. Responsible for energy coupling to the transport system. The protein is Spermidine/putrescine import ATP-binding protein PotA of Haemophilus influenzae (strain 86-028NP).